The chain runs to 111 residues: Cyanovirin-N homolog (111 aa).

The protein belongs to the cyanovirin-N family.

Mannose-binding lectin. The sequence is that of Cyanovirin-N homolog from Neurospora crassa (strain ATCC 24698 / 74-OR23-1A / CBS 708.71 / DSM 1257 / FGSC 987).